The primary structure comprises 227 residues: Cytochrome c oxidase subunit 2 (227 aa).

The Mitochondrial intermembrane segment spans residues 1–14 (MAYPFQLGLQDATS). The helical transmembrane segment at 15 to 45 (PIMEELLHFHDHTLMIVFLISSLILYIISLM) threads the bilayer. Topologically, residues 46–59 (LTTKLTHTSTMDAQ) are mitochondrial matrix. Residues 60–87 (EVETVWTILPAIILILIALPSLRILYMM) traverse the membrane as a helical segment. Residues 88–227 (DEINNPSLTV…YFETWSALMV (140 aa)) lie on the Mitochondrial intermembrane side of the membrane. Residues His-161, Cys-196, Glu-198, Cys-200, His-204, and Met-207 each coordinate Cu cation. Glu-198 contributes to the Mg(2+) binding site. Tyr-218 is subject to Phosphotyrosine.

Belongs to the cytochrome c oxidase subunit 2 family. In terms of assembly, component of the cytochrome c oxidase (complex IV, CIV), a multisubunit enzyme composed of 14 subunits. The complex is composed of a catalytic core of 3 subunits MT-CO1, MT-CO2 and MT-CO3, encoded in the mitochondrial DNA, and 11 supernumerary subunits COX4I, COX5A, COX5B, COX6A, COX6B, COX6C, COX7A, COX7B, COX7C, COX8 and NDUFA4, which are encoded in the nuclear genome. The complex exists as a monomer or a dimer and forms supercomplexes (SCs) in the inner mitochondrial membrane with NADH-ubiquinone oxidoreductase (complex I, CI) and ubiquinol-cytochrome c oxidoreductase (cytochrome b-c1 complex, complex III, CIII), resulting in different assemblies (supercomplex SCI(1)III(2)IV(1) and megacomplex MCI(2)III(2)IV(2)). Found in a complex with TMEM177, COA6, COX18, COX20, SCO1 and SCO2. Interacts with TMEM177 in a COX20-dependent manner. Interacts with COX20. Interacts with COX16. Cu cation is required as a cofactor.

It localises to the mitochondrion inner membrane. It carries out the reaction 4 Fe(II)-[cytochrome c] + O2 + 8 H(+)(in) = 4 Fe(III)-[cytochrome c] + 2 H2O + 4 H(+)(out). In terms of biological role, component of the cytochrome c oxidase, the last enzyme in the mitochondrial electron transport chain which drives oxidative phosphorylation. The respiratory chain contains 3 multisubunit complexes succinate dehydrogenase (complex II, CII), ubiquinol-cytochrome c oxidoreductase (cytochrome b-c1 complex, complex III, CIII) and cytochrome c oxidase (complex IV, CIV), that cooperate to transfer electrons derived from NADH and succinate to molecular oxygen, creating an electrochemical gradient over the inner membrane that drives transmembrane transport and the ATP synthase. Cytochrome c oxidase is the component of the respiratory chain that catalyzes the reduction of oxygen to water. Electrons originating from reduced cytochrome c in the intermembrane space (IMS) are transferred via the dinuclear copper A center (CU(A)) of subunit 2 and heme A of subunit 1 to the active site in subunit 1, a binuclear center (BNC) formed by heme A3 and copper B (CU(B)). The BNC reduces molecular oxygen to 2 water molecules using 4 electrons from cytochrome c in the IMS and 4 protons from the mitochondrial matrix. This chain is Cytochrome c oxidase subunit 2 (MT-CO2), found in Canis simensis (Ethiopian wolf).